The sequence spans 347 residues: Olfactory receptor 2M2 (347 aa).

Topologically, residues 1–25 (MAWENQTFNSDFILLGIFNHSPPHT) are extracellular. N-linked (GlcNAc...) asparagine glycosylation occurs at N5. The chain crosses the membrane as a helical span at residues 26 to 49 (FLFFLVLGIFLVAFMGNSVMVLLI). Over 50 to 57 (YLDTQLHT) the chain is Cytoplasmic. A helical membrane pass occupies residues 58–79 (PMYFLLSQLSLMDLMLICTTVP). Residues 80 to 100 (KMAFNYLSGSKSISMAGCVTQ) lie on the Extracellular side of the membrane. C97 and C189 are joined by a disulfide. Residues 101 to 120 (IFFYISLSGSECFLLAVMAY) traverse the membrane as a helical segment. Topologically, residues 121–139 (DRYIAICHPLRYTNLMNPK) are cytoplasmic. A helical transmembrane segment spans residues 140 to 158 (ICGLMATFSWILGSTDGII). Residues 159–195 (DAVATFSFSFCGSREIAHFFCEFPSLLILSCNDTSIF) are Extracellular-facing. An N-linked (GlcNAc...) asparagine glycan is attached at N190. The chain crosses the membrane as a helical span at residues 196 to 219 (EEVIFICCIVMLVFPVAIIIASYA). Residues 220-236 (RVILAVIHMGSGEGRCK) lie on the Cytoplasmic side of the membrane. A helical transmembrane segment spans residues 237–259 (AFTTCSSHLMVVGMYYGAALFMY). Residues 260 to 272 (IRPTSDHSPTQDK) are Extracellular-facing. The chain crosses the membrane as a helical span at residues 273–292 (MVSVFYTILTPMLNPLIYSL). Topologically, residues 293-347 (RNKEVTRAFMKILGKGKSESELPHKLYVLLFAKFFFLISIFFYDVKILALIMYIA) are cytoplasmic.

It belongs to the G-protein coupled receptor 1 family.

It is found in the cell membrane. Functionally, odorant receptor. This is Olfactory receptor 2M2 (OR2M2) from Homo sapiens (Human).